We begin with the raw amino-acid sequence, 82 residues long: Immediate early response 3-interacting protein 1 (82 aa).

The next 2 membrane-spanning stretches (helical) occupy residues 2 to 22 (AFTLYALIQTAILFTNAIAVL) and 62 to 82 (VMRVPLIAVNSVCIVLLLLFG).

The protein belongs to the YOS1 family.

The protein localises to the endoplasmic reticulum membrane. Regulator of endoplasmic reticulum secretion that acts as a key determinant of brain size. Required for secretion of extracellular matrix proteins. Required for correct brain development by depositing sufficient extracellular matrix proteins for tissue integrity and the proliferation of neural progenitors. Acts as a regulator of the unfolded protein response (UPR). The chain is Immediate early response 3-interacting protein 1 from Danio rerio (Zebrafish).